A 683-amino-acid polypeptide reads, in one-letter code: Amphiphysin (683 aa).

2 coiled-coil regions span residues 10 to 83 (AKNV…SLHE) and 144 to 191 (DYDS…QEEL). One can recognise a BAR domain in the interval 24 to 240 (VLQKLGKADE…MTKLGDQHAD (217 aa)). Disordered regions lie at residues 244–311 (SIQG…KVTP), 421–443 (AETEQALPTEPQAEEPPTTAAAP), and 455–599 (EPKE…ASLS). Serine 252 is modified (phosphoserine). Threonine 260 carries the post-translational modification Phosphothreonine. The span at 261 to 274 (PSPPEEASPLPSPT) shows a compositional bias: pro residues. Residues serine 262, serine 268, serine 272, and serine 276 each carry the phosphoserine modification. Phosphothreonine is present on threonine 280. Low complexity-rich tracts occupy residues 424 to 443 (EQALPTEPQAEEPPTTAAAP) and 468 to 477 (AGETVGTEGS). Phosphoserine is present on serine 496. A compositionally biased stretch (basic and acidic residues) spans 539–559 (SNHEGEEHQETTTGTETREAT). The span at 585 to 596 (AATPAPAGAVDA) shows a compositional bias: low complexity. The region spanning 610–683 (GFLYKVETLH…FPENFTRHLE (74 aa)) is the SH3 domain. Serine 626 bears the Phosphoserine mark.

In terms of assembly, heterodimer with BIN1. Binds SH3GLB1. Interacts with REPS1 and SGIP1. Binds AP2A2. Interacts with AP2B1. Interacts with DNM1 and SYNJ1.

It is found in the cytoplasmic vesicle. Its subcellular location is the secretory vesicle. It localises to the synaptic vesicle membrane. The protein resides in the cytoplasm. The protein localises to the cytoskeleton. Functionally, may participate in mechanisms of regulated exocytosis in synapses and certain endocrine cell types. May control the properties of the membrane associated cytoskeleton. This is Amphiphysin (Amph) from Rattus norvegicus (Rat).